The sequence spans 400 residues: Subtilisin-like protease 7 (400 aa).

Positions 1 to 20 are cleaved as a signal peptide; the sequence is MGFITKAIPLALAAASVING. A propeptide spanning residues 21-119 is cleaved from the precursor; that stretch reads AEILETRAGV…IERDARVQIN (99 aa). An Inhibitor I9 domain is found at 36-118; it reads KYIVVMNDGI…YIERDARVQI (83 aa). Residues 129-400 enclose the Peptidase S8 domain; that stretch reads SWGLARVGSK…SKLINNGSGM (272 aa). Residues aspartate 161 and histidine 192 each act as charge relay system in the active site. Asparagine 252 carries N-linked (GlcNAc...) asparagine glycosylation. Serine 346 (charge relay system) is an active-site residue. Residue asparagine 396 is glycosylated (N-linked (GlcNAc...) asparagine).

It belongs to the peptidase S8 family.

It is found in the secreted. Its function is as follows. Secreted subtilisin-like serine protease with keratinolytic activity that contributes to pathogenicity. The protein is Subtilisin-like protease 7 (SUB7) of Trichophyton violaceum.